We begin with the raw amino-acid sequence, 507 residues long: Cytochrome P450 4A14 (507 aa).

Residues 1–4 (MGFS) constitute a propeptide, removed in mature form. E318 lines the heme pocket. S437 carries the phosphoserine modification. C454 lines the heme pocket.

Belongs to the cytochrome P450 family. It depends on heme as a cofactor.

Its subcellular location is the endoplasmic reticulum membrane. It localises to the microsome membrane. It catalyses the reaction an omega-methyl-long-chain fatty acid + reduced [NADPH--hemoprotein reductase] + O2 = an omega-hydroxy-long-chain fatty acid + oxidized [NADPH--hemoprotein reductase] + H2O + H(+). It carries out the reaction dodecanoate + reduced [NADPH--hemoprotein reductase] + O2 = (11R)-hydroxydodecanoate + oxidized [NADPH--hemoprotein reductase] + H2O + H(+). The enzyme catalyses dodecanoate + reduced [NADPH--hemoprotein reductase] + O2 = 12-hydroxydodecanoate + oxidized [NADPH--hemoprotein reductase] + H2O + H(+). The catalysed reaction is tetradecanoate + reduced [NADPH--hemoprotein reductase] + O2 = 14-hydroxytetradecanoate + oxidized [NADPH--hemoprotein reductase] + H2O + H(+). Its pathway is lipid metabolism; fatty acid metabolism. A cytochrome P450 monooxygenase that catalyzes omega and omega-1 hydroxylation of saturated fatty acids. Exhibits preferential omega versus omega-1 regioselectivity and (R) versus (S) stereoselectivity for hydroxylation of dodecanoic (lauric) acid. Mechanistically, uses molecular oxygen inserting one oxygen atom into a substrate, and reducing the second into a water molecule, with two electrons provided by NADPH via cytochrome P450 reductase (CPR; NADPH-ferrihemoprotein reductase). The polypeptide is Cytochrome P450 4A14 (Rattus norvegicus (Rat)).